The primary structure comprises 473 residues: Chromosomal replication initiator protein DnaA (473 aa).

The interval M1–P76 is domain I, interacts with DnaA modulators. Residues P76–T135 are domain II. The tract at residues Q136–S353 is domain III, AAA+ region. The ATP site is built by G181, G183, K184, and T185. Positions V354 to N473 are domain IV, binds dsDNA.

Belongs to the DnaA family. In terms of assembly, oligomerizes as a right-handed, spiral filament on DNA at oriC.

It localises to the cytoplasm. Its function is as follows. Plays an essential role in the initiation and regulation of chromosomal replication. ATP-DnaA binds to the origin of replication (oriC) to initiate formation of the DNA replication initiation complex once per cell cycle. Binds the DnaA box (a 9 base pair repeat at the origin) and separates the double-stranded (ds)DNA. Forms a right-handed helical filament on oriC DNA; dsDNA binds to the exterior of the filament while single-stranded (ss)DNA is stabiized in the filament's interior. The ATP-DnaA-oriC complex binds and stabilizes one strand of the AT-rich DNA unwinding element (DUE), permitting loading of DNA polymerase. After initiation quickly degrades to an ADP-DnaA complex that is not apt for DNA replication. Binds acidic phospholipids. The protein is Chromosomal replication initiator protein DnaA of Porphyromonas gingivalis (strain ATCC 33277 / DSM 20709 / CIP 103683 / JCM 12257 / NCTC 11834 / 2561).